The primary structure comprises 415 residues: Thyroxine-binding globulin (415 aa).

Residues 1–20 (MSPFLYLVLLVLGLHATIHC) form the signal peptide. Asn-36, Asn-99, Asn-165, and Asn-253 each carry an N-linked (GlcNAc...) asparagine glycan. Residues Asn-293 and Arg-398 each coordinate thyroxine.

Belongs to the serpin family.

The protein localises to the secreted. Major thyroid hormone transport protein in serum. The polypeptide is Thyroxine-binding globulin (SERPINA7) (Pan troglodytes (Chimpanzee)).